The primary structure comprises 179 residues: Zinc finger HIT domain-containing protein 3 (179 aa).

Zn(2+) is bound by residues Cys-11, Cys-14, Cys-22, Cys-25, Cys-30, Cys-34, His-38, and Cys-49. An HIT-type zinc finger spans residues 11-49 (CVVCLEKPKYRCPACRVPYCSLPCFRKHKAPPLQQLPVC). At Ser-104 the chain carries Phosphoserine.

Thyroid receptor interacting proteins (TRIPs) specifically interact with the ligand binding domain of the thyroid receptor (TR). Requires the presence of thyroid hormone for its interaction. Interacts with NUFIP1. Interacts (via HIT-type zinc finger) with the RUVBL1/RUVBL2 complex in the presence of ADP.

It is found in the cytoplasm. Its subcellular location is the nucleus. This chain is Zinc finger HIT domain-containing protein 3 (ZNHIT3), found in Bos taurus (Bovine).